Consider the following 219-residue polypeptide: Thiamine-phosphate synthase (219 aa).

Residues glutamine 44–lysine 48 and asparagine 79 each bind 4-amino-2-methyl-5-(diphosphooxymethyl)pyrimidine. Mg(2+) contacts are provided by aspartate 80 and aspartate 99. Residue serine 117 coordinates 4-amino-2-methyl-5-(diphosphooxymethyl)pyrimidine. Threonine 143 to threonine 145 contributes to the 2-[(2R,5Z)-2-carboxy-4-methylthiazol-5(2H)-ylidene]ethyl phosphate binding site. Lysine 146 contacts 4-amino-2-methyl-5-(diphosphooxymethyl)pyrimidine. 2-[(2R,5Z)-2-carboxy-4-methylthiazol-5(2H)-ylidene]ethyl phosphate is bound by residues glycine 175 and isoleucine 195–serine 196.

This sequence belongs to the thiamine-phosphate synthase family. The cofactor is Mg(2+).

The catalysed reaction is 2-[(2R,5Z)-2-carboxy-4-methylthiazol-5(2H)-ylidene]ethyl phosphate + 4-amino-2-methyl-5-(diphosphooxymethyl)pyrimidine + 2 H(+) = thiamine phosphate + CO2 + diphosphate. It catalyses the reaction 2-(2-carboxy-4-methylthiazol-5-yl)ethyl phosphate + 4-amino-2-methyl-5-(diphosphooxymethyl)pyrimidine + 2 H(+) = thiamine phosphate + CO2 + diphosphate. The enzyme catalyses 4-methyl-5-(2-phosphooxyethyl)-thiazole + 4-amino-2-methyl-5-(diphosphooxymethyl)pyrimidine + H(+) = thiamine phosphate + diphosphate. The protein operates within cofactor biosynthesis; thiamine diphosphate biosynthesis; thiamine phosphate from 4-amino-2-methyl-5-diphosphomethylpyrimidine and 4-methyl-5-(2-phosphoethyl)-thiazole: step 1/1. In terms of biological role, condenses 4-methyl-5-(beta-hydroxyethyl)thiazole monophosphate (THZ-P) and 2-methyl-4-amino-5-hydroxymethyl pyrimidine pyrophosphate (HMP-PP) to form thiamine monophosphate (TMP). This is Thiamine-phosphate synthase from Bacillus thuringiensis (strain Al Hakam).